Here is a 700-residue protein sequence, read N- to C-terminus: Elongation factor G (700 aa).

Residues 8-290 (ERYRNIGISA…AVIDYLPAPT (283 aa)) form the tr-type G domain. GTP-binding positions include 17 to 24 (AHIDAGKT), 88 to 92 (DTPGH), and 142 to 145 (NKMD).

This sequence belongs to the TRAFAC class translation factor GTPase superfamily. Classic translation factor GTPase family. EF-G/EF-2 subfamily.

It localises to the cytoplasm. Catalyzes the GTP-dependent ribosomal translocation step during translation elongation. During this step, the ribosome changes from the pre-translocational (PRE) to the post-translocational (POST) state as the newly formed A-site-bound peptidyl-tRNA and P-site-bound deacylated tRNA move to the P and E sites, respectively. Catalyzes the coordinated movement of the two tRNA molecules, the mRNA and conformational changes in the ribosome. This is Elongation factor G from Glaesserella parasuis serovar 5 (strain SH0165) (Haemophilus parasuis).